The following is a 311-amino-acid chain: Methionyl-tRNA formyltransferase (311 aa).

The interval 33 to 52 is disordered; that stretch reads RPDRPAGRGRHQRSSPVREL. 110-113 is a (6S)-5,6,7,8-tetrahydrofolate binding site; that stretch reads SLLP.

Belongs to the Fmt family.

It catalyses the reaction L-methionyl-tRNA(fMet) + (6R)-10-formyltetrahydrofolate = N-formyl-L-methionyl-tRNA(fMet) + (6S)-5,6,7,8-tetrahydrofolate + H(+). Functionally, attaches a formyl group to the free amino group of methionyl-tRNA(fMet). The formyl group appears to play a dual role in the initiator identity of N-formylmethionyl-tRNA by promoting its recognition by IF2 and preventing the misappropriation of this tRNA by the elongation apparatus. In Parafrankia sp. (strain EAN1pec), this protein is Methionyl-tRNA formyltransferase.